The sequence spans 110 residues: UPF0122 protein SMU_1061 (110 aa).

Belongs to the UPF0122 family.

Might take part in the signal recognition particle (SRP) pathway. This is inferred from the conservation of its genetic proximity to ftsY/ffh. May be a regulatory protein. This Streptococcus mutans serotype c (strain ATCC 700610 / UA159) protein is UPF0122 protein SMU_1061 (ylxM).